Reading from the N-terminus, the 255-residue chain is Indole-3-glycerol phosphate synthase (255 aa).

Belongs to the TrpC family.

The enzyme catalyses 1-(2-carboxyphenylamino)-1-deoxy-D-ribulose 5-phosphate + H(+) = (1S,2R)-1-C-(indol-3-yl)glycerol 3-phosphate + CO2 + H2O. It participates in amino-acid biosynthesis; L-tryptophan biosynthesis; L-tryptophan from chorismate: step 4/5. The chain is Indole-3-glycerol phosphate synthase from Streptococcus pneumoniae (strain 70585).